Consider the following 26-residue polypeptide: ATP synthase subunit gamma, mitochondrial (26 aa).

Belongs to the ATPase gamma chain family. F-type ATPases have 2 components, CF(1) - the catalytic core - and CF(0) - the membrane proton channel. CF(1) has five subunits: alpha(3), beta(3), gamma(1), delta(1), epsilon(1). CF(0) has three main subunits: a, b and c.

It is found in the mitochondrion. Its subcellular location is the mitochondrion inner membrane. In terms of biological role, mitochondrial membrane ATP synthase (F(1)F(0) ATP synthase or Complex V) produces ATP from ADP in the presence of a proton gradient across the membrane which is generated by electron transport complexes of the respiratory chain. F-type ATPases consist of two structural domains, F(1) - containing the extramembraneous catalytic core, and F(0) - containing the membrane proton channel, linked together by a central stalk and a peripheral stalk. During catalysis, ATP synthesis in the catalytic domain of F(1) is coupled via a rotary mechanism of the central stalk subunits to proton translocation. Part of the complex F(1) domain and the central stalk which is part of the complex rotary element. The gamma subunit protrudes into the catalytic domain formed of alpha(3)beta(3). Rotation of the central stalk against the surrounding alpha(3)beta(3) subunits leads to hydrolysis of ATP in three separate catalytic sites on the beta subunits. The sequence is that of ATP synthase subunit gamma, mitochondrial (ATPC) from Spinacia oleracea (Spinach).